The sequence spans 72 residues: Translation initiation factor IF-1 (72 aa).

The region spanning 1–72 is the S1-like domain; sequence MAKKDVIELE…TRGRITWRKK (72 aa).

The protein belongs to the IF-1 family. As to quaternary structure, component of the 30S ribosomal translation pre-initiation complex which assembles on the 30S ribosome in the order IF-2 and IF-3, IF-1 and N-formylmethionyl-tRNA(fMet); mRNA recruitment can occur at any time during PIC assembly.

The protein resides in the cytoplasm. In terms of biological role, one of the essential components for the initiation of protein synthesis. Stabilizes the binding of IF-2 and IF-3 on the 30S subunit to which N-formylmethionyl-tRNA(fMet) subsequently binds. Helps modulate mRNA selection, yielding the 30S pre-initiation complex (PIC). Upon addition of the 50S ribosomal subunit IF-1, IF-2 and IF-3 are released leaving the mature 70S translation initiation complex. The sequence is that of Translation initiation factor IF-1 from Clostridioides difficile (strain 630) (Peptoclostridium difficile).